Here is a 57-residue protein sequence, read N- to C-terminus: Zinc finger protein MJ0458.1 (57 aa).

4 short sequence motifs (c(P)XCG motif) span residues 8-12 (CISCN), 26-30 (CPNCG), 37-41 (CERCR), and 49-53 (CPKCG). 2 residues coordinate Zn(2+): C26 and C29. C49 and C52 together coordinate Zn(2+).

Monomer in solution.

Zinc-binding protein that binds only one zinc ion. The chain is Zinc finger protein MJ0458.1 from Methanocaldococcus jannaschii (strain ATCC 43067 / DSM 2661 / JAL-1 / JCM 10045 / NBRC 100440) (Methanococcus jannaschii).